The sequence spans 366 residues: tRNA 2-selenouridine synthase (366 aa).

In terms of domain architecture, Rhodanese spans 12–135; that stretch reads FLNDVPMMDA…MRTFLLDTLH (124 aa). The active-site S-selanylcysteine intermediate is the cysteine 95.

It belongs to the SelU family. In terms of assembly, monomer.

It catalyses the reaction 5-methylaminomethyl-2-thiouridine(34) in tRNA + selenophosphate + (2E)-geranyl diphosphate + H2O + H(+) = 5-methylaminomethyl-2-selenouridine(34) in tRNA + (2E)-thiogeraniol + phosphate + diphosphate. It carries out the reaction 5-methylaminomethyl-2-thiouridine(34) in tRNA + (2E)-geranyl diphosphate = 5-methylaminomethyl-S-(2E)-geranyl-thiouridine(34) in tRNA + diphosphate. The enzyme catalyses 5-methylaminomethyl-S-(2E)-geranyl-thiouridine(34) in tRNA + selenophosphate + H(+) = 5-methylaminomethyl-2-(Se-phospho)selenouridine(34) in tRNA + (2E)-thiogeraniol. The catalysed reaction is 5-methylaminomethyl-2-(Se-phospho)selenouridine(34) in tRNA + H2O = 5-methylaminomethyl-2-selenouridine(34) in tRNA + phosphate. In terms of biological role, involved in the post-transcriptional modification of the uridine at the wobble position (U34) of tRNA(Lys), tRNA(Glu) and tRNA(Gln). Catalyzes the conversion of 2-thiouridine (S2U-RNA) to 2-selenouridine (Se2U-RNA). Acts in a two-step process involving geranylation of 2-thiouridine (S2U) to S-geranyl-2-thiouridine (geS2U) and subsequent selenation of the latter derivative to 2-selenouridine (Se2U) in the tRNA chain. This Pseudomonas savastanoi pv. phaseolicola (strain 1448A / Race 6) (Pseudomonas syringae pv. phaseolicola (strain 1448A / Race 6)) protein is tRNA 2-selenouridine synthase.